Here is a 138-residue protein sequence, read N- to C-terminus: Small ribosomal subunit protein uS8c (138 aa).

Belongs to the universal ribosomal protein uS8 family. In terms of assembly, part of the 30S ribosomal subunit.

It localises to the plastid. It is found in the chloroplast. One of the primary rRNA binding proteins, it binds directly to 16S rRNA central domain where it helps coordinate assembly of the platform of the 30S subunit. This Chlorella vulgaris (Green alga) protein is Small ribosomal subunit protein uS8c (rps8).